We begin with the raw amino-acid sequence, 196 residues long: Imidazoleglycerol-phosphate dehydratase (196 aa).

It belongs to the imidazoleglycerol-phosphate dehydratase family.

The protein localises to the cytoplasm. It catalyses the reaction D-erythro-1-(imidazol-4-yl)glycerol 3-phosphate = 3-(imidazol-4-yl)-2-oxopropyl phosphate + H2O. It functions in the pathway amino-acid biosynthesis; L-histidine biosynthesis; L-histidine from 5-phospho-alpha-D-ribose 1-diphosphate: step 6/9. The sequence is that of Imidazoleglycerol-phosphate dehydratase from Ralstonia nicotianae (strain ATCC BAA-1114 / GMI1000) (Ralstonia solanacearum).